A 526-amino-acid chain; its full sequence is Peptide chain release factor 3 (526 aa).

The region spanning 9–277 (NKRRTFAIIS…DFVEYAPGPQ (269 aa)) is the tr-type G domain. GTP contacts are provided by residues 18–25 (SHPDAGKT), 86–90 (DTPGH), and 140–143 (NKLD).

This sequence belongs to the TRAFAC class translation factor GTPase superfamily. Classic translation factor GTPase family. PrfC subfamily.

It localises to the cytoplasm. Its function is as follows. Increases the formation of ribosomal termination complexes and stimulates activities of RF-1 and RF-2. It binds guanine nucleotides and has strong preference for UGA stop codons. It may interact directly with the ribosome. The stimulation of RF-1 and RF-2 is significantly reduced by GTP and GDP, but not by GMP. The polypeptide is Peptide chain release factor 3 (Legionella pneumophila (strain Corby)).